Consider the following 445-residue polypeptide: POU domain, class 5, transcription factor 1.2 (445 aa).

Polar residues-rich tracts occupy residues 76–88 and 164–182; these read SANQLGISGQGNP and IFTSSPDKSGESGISSLDN. Disordered stretches follow at residues 76–116 and 139–227; these read SANQ…PSLP and TTVV…GEME. Over residues 183 to 200 the composition is skewed to low complexity; that stretch reads SRCSSATSSSSGGTNVGT. A POU-specific domain is found at 218–292; the sequence is EEAPNSGEME…LLRSWLHEVE (75 aa). Residues 312–371 constitute a DNA-binding region (homeobox); it reads KRKHRTSIENNVKCTLENYFMQCSKPSAQEIAQIARELNMEKDVVRVWFCNRRQKGKRQV.

This sequence belongs to the POU transcription factor family. Class-5 subfamily. As to quaternary structure, interacts with the transcription factors tcf7l1/tcf3 and vegt. As to expression, initially (stage 9) expressed in all regions of the embryo, becoming localized to the ventroposterior regions by early neurula stages. In adults, expressed at a low level in the brain.

It is found in the nucleus. In terms of biological role, transcription factor that binds to the octamer motif (5'-ATTTGCAT-3'). Antagonizes the activity of nodal/activin signaling during gastrulation to suppress mesendoderm formation. This chain is POU domain, class 5, transcription factor 1.2 (pou5f1.2), found in Xenopus laevis (African clawed frog).